The following is a 285-amino-acid chain: tRNA uridine(34) hydroxylase (285 aa).

In terms of domain architecture, Rhodanese spans 130–225 (RGDDVVFFDG…YGEAFGDTGL (96 aa)). The active-site Cysteine persulfide intermediate is the C185.

The protein belongs to the TrhO family.

The catalysed reaction is uridine(34) in tRNA + AH2 + O2 = 5-hydroxyuridine(34) in tRNA + A + H2O. Catalyzes oxygen-dependent 5-hydroxyuridine (ho5U) modification at position 34 in tRNAs. The protein is tRNA uridine(34) hydroxylase of Rhodococcus opacus (strain B4).